A 1004-amino-acid chain; its full sequence is 26S proteasome non-ATPase regulatory subunit 1 homolog A (1004 aa).

Ala2 carries the N-acetylalanine modification. Lys166 participates in a covalent cross-link: Glycyl lysine isopeptide (Lys-Gly) (interchain with G-Cter in ubiquitin). PC repeat units lie at residues 412 to 447, 452 to 485, 487 to 521, 522 to 555, 557 to 590, 591 to 626, 627 to 659, 661 to 695, 696 to 736, and 739 to 771; these read SATA…GGSP, GALY…EVIQ, GACL…VAGE, AAGI…EKII, GLAL…IIRY, GGMY…DVRR, TAVL…PHVR, GAAL…FVRQ, GALI…DTMS, and GAIL…TAVI. Disordered regions lie at residues 858 to 905 and 959 to 1004; these read EQKA…KKAP and VLSL…EYAS. At Ser896 the chain carries Phosphoserine. Positions 965–987 are enriched in low complexity; it reads APTSTASPATGTAAAAQGTPASA.

The protein belongs to the proteasome subunit S1 family. Component of the 19S regulatory particle (RP/PA700) base subcomplex of the 26S proteasome. The 26S proteasome is composed of a core protease (CP), known as the 20S proteasome, capped at one or both ends by the 19S regulatory particle (RP/PA700). The RP/PA700 complex is composed of at least 17 different subunits in two subcomplexes, the base and the lid, which form the portions proximal and distal to the 20S proteolytic core, respectively. As to expression, ubiquitous with highest expression in flowers.

In terms of biological role, acts as a regulatory subunit of the 26 proteasome which is involved in the ATP-dependent degradation of ubiquitinated proteins. This Arabidopsis thaliana (Mouse-ear cress) protein is 26S proteasome non-ATPase regulatory subunit 1 homolog A (RPN2A).